A 229-amino-acid polypeptide reads, in one-letter code: Potassium/proton antiporter CemA (229 aa).

The next 4 membrane-spanning stretches (helical) occupy residues 7 to 27 (FTPL…SLSL), 114 to 134 (IICF…LLIL), 154 to 174 (ILLL…ELMI), and 189 to 209 (IISG…KYWI).

It belongs to the CemA family.

The protein localises to the plastid. The protein resides in the chloroplast inner membrane. It catalyses the reaction K(+)(in) + H(+)(out) = K(+)(out) + H(+)(in). Functionally, contributes to K(+)/H(+) antiport activity by supporting proton efflux to control proton extrusion and homeostasis in chloroplasts in a light-dependent manner to modulate photosynthesis. Prevents excessive induction of non-photochemical quenching (NPQ) under continuous-light conditions. Indirectly promotes efficient inorganic carbon uptake into chloroplasts. The sequence is that of Potassium/proton antiporter CemA from Vitis vinifera (Grape).